A 315-amino-acid polypeptide reads, in one-letter code: uncharacterized protein (315 aa).

The protein belongs to the carbohydrate kinase PfkB family.

This is an uncharacterized protein from Escherichia coli (strain K12).